Consider the following 153-residue polypeptide: Histone H2A.Z-specific chaperone CHZ1 (153 aa).

The span at Met-1–Lys-29 shows a compositional bias: basic and acidic residues. The disordered stretch occupies residues Met-1–Glu-153. Ser-2 bears the N-acetylserine mark. Residues Leu-56–Val-65 show a composition bias toward polar residues. Residues Ser-68 and Ser-70 each carry the phosphoserine modification. Residues Glu-84–Glu-94 show a composition bias toward acidic residues. The tract at residues Glu-87–Arg-108 is important for H2A.Z-H2B binding. The segment covering Lys-110 to Glu-138 has biased composition (basic and acidic residues). Residues Lys-139–Glu-153 show a composition bias toward acidic residues.

It belongs to the CHZ1 family. As to quaternary structure, forms a heterotrimer with H2A.Z-H2B, stabilizing the association of the histone dimer. Also, with a lower affinity, forms a heterotrimer with H2A-H2B.

The protein resides in the nucleus. Functionally, forms a chaperone-bound H2A.Z-H2B complex that acts as a source for SWR1 complex-dependent H2A to H2A.Z histone replacement in chromatin. The protein is Histone H2A.Z-specific chaperone CHZ1 (CHZ1) of Saccharomyces cerevisiae (strain ATCC 204508 / S288c) (Baker's yeast).